A 33-amino-acid polypeptide reads, in one-letter code: Dermaseptin-H8 (33 aa).

Leu33 carries the leucine amide modification.

In terms of tissue distribution, expressed by the skin glands.

Its subcellular location is the secreted. In terms of biological role, has antimicrobial activity. The chain is Dermaseptin-H8 from Pithecopus hypochondrialis (Orange-legged leaf frog).